The following is a 691-amino-acid chain: Pre-mRNA-splicing factor CLF1 (691 aa).

HAT repeat units follow at residues 52 to 84, 86 to 118, 120 to 152, 154 to 185, 187 to 218, 220 to 258, 260 to 294, 304 to 336, 338 to 372, 382 to 418, 420 to 451, 453 to 485, 487 to 521, 523 to 554, 574 to 612, and 617 to 650; these read EYQGRKRKEFESYCQRSGFNLKNWLQYAQWELE, KEYARSRSVFERALNLHANKVTLWIRYVEAELK, RNINFARNLLDRAVTHLPRVDKLWYKYVWVEEM, GNIPGVRQVFERWMEWQPDEAAWSAFIKLEQR, GEYDRAREIFTRFTMVHPEPRNWIKWSKFEEE, GTSDRVREVFERAIEELSKYGDEFVEERLFIAYARYEAK, HDLDRARAIYKFGLENLPRSKAMLLHKEYTTFEKQ, VVLSKRRRHYEDLVRENPKNYDVWFDYARLEEA, GDIDRTREVYEKAIAQVPPTQAKRHWRRYIYLWIF, KNPERARQVYDTCLKLIPHRTFTFAKVWMHKAHFEIR, GDLAAARKTLGRAIGMCPKDRLFKGYIEMEQK, YEFGRCRILYEKHIAYNPANCSTWVKWAELERG, DDLDRARAILDMGIAQPVLDMPEVVWKSYIDFEEE, GEYDKTRSLYERLLDKADHPKVWISYAQFEIN, EAKARARRVFERAHQGFKDKEMKAERVSILNAWLVFEKT, and EDIEKIEKQMPRRTKKKRKLDDDTWEEYVDYIFP.

The protein belongs to the crooked-neck family. As to quaternary structure, associated with the spliceosome.

The protein localises to the nucleus. In terms of biological role, involved in pre-mRNA splicing and cell cycle progression. Required for the spliceosome assembly and initiation of the DNA replication. The sequence is that of Pre-mRNA-splicing factor CLF1 (CLF1) from Pyricularia oryzae (strain 70-15 / ATCC MYA-4617 / FGSC 8958) (Rice blast fungus).